The following is a 120-amino-acid chain: MARIAGVDLPKKKRVEYALTYIYGIGLKSSQDILKAVNISFDKRVSDLSEDEVSSIAKKIQESYMVEGDLRKKVTMDIKSLMDLGSYRGLRHRKGLPVRGQTTKNNARTRKGKKKTVGSK.

A disordered region spans residues 92 to 120 (HRKGLPVRGQTTKNNARTRKGKKKTVGSK). Over residues 107–120 (ARTRKGKKKTVGSK) the composition is skewed to basic residues.

Belongs to the universal ribosomal protein uS13 family. As to quaternary structure, part of the 30S ribosomal subunit. Forms a loose heterodimer with protein S19. Forms two bridges to the 50S subunit in the 70S ribosome.

Located at the top of the head of the 30S subunit, it contacts several helices of the 16S rRNA. In the 70S ribosome it contacts the 23S rRNA (bridge B1a) and protein L5 of the 50S subunit (bridge B1b), connecting the 2 subunits; these bridges are implicated in subunit movement. Contacts the tRNAs in the A and P-sites. The chain is Small ribosomal subunit protein uS13 from Helicobacter hepaticus (strain ATCC 51449 / 3B1).